Reading from the N-terminus, the 555-residue chain is Transmembrane protein 87B (555 aa).

The signal sequence occupies residues 1 to 42; that stretch reads MVAACRSVAGLLPRRRRCFPARAPLLRVALCLLCWTPAAVRA. Topologically, residues 43–214 are lumenal; the sequence is VPELGLWLET…PHGYISASDW (172 aa). Residues Asn-68 and Asn-197 are each glycosylated (N-linked (GlcNAc...) asparagine). Residues 215–235 form a helical membrane-spanning segment; that stretch reads PLMIFYMVMCIVYILYGILWL. Topologically, residues 236–247 are cytoplasmic; sequence TWSACYWKDILR. A helical membrane pass occupies residues 248 to 268; it reads IQFWIAAVIFLGMLEKAVFYS. Over 269–299 the chain is Lumenal; sequence EYQNISNTGLSTQGLLIFAELISAIKRTLAR. Residue Asn-272 is glycosylated (N-linked (GlcNAc...) asparagine). The chain crosses the membrane as a helical span at residues 300–320; it reads LLVIIVSLGYGIVKPRLGTVM. The Cytoplasmic segment spans residues 321–322; the sequence is HR. A helical transmembrane segment spans residues 323–343; that stretch reads VIGLGLLYLIFAAVEGVMRVI. The Lumenal portion of the chain corresponds to 344-350; sequence GGSNHLA. Residues 351–371 traverse the membrane as a helical segment; the sequence is VVLDDIILAVIDSIFVWFIFI. At 372–396 the chain is on the cytoplasmic side; sequence SLAQTMKTLRLRKNTVKFSLYRHFK. A helical transmembrane segment spans residues 397 to 417; sequence NTLIFAVLASIVFMGWTTKTF. The Lumenal portion of the chain corresponds to 418-429; sequence RIAKCQSDWMER. A helical membrane pass occupies residues 430 to 450; it reads WVDDAFWSFLFSLILIVIMFL. The Cytoplasmic portion of the chain corresponds to 451–555; it reads WRPSANNQRY…EKMFSSEKIM (105 aa). Residues Ser-469, Ser-494, Ser-496, and Ser-534 each carry the phosphoserine modification.

Belongs to the LU7TM family. TMEM87 subfamily.

The protein localises to the golgi apparatus membrane. Its function is as follows. May be involved in retrograde transport from endosomes to the trans-Golgi network (TGN). The chain is Transmembrane protein 87B from Homo sapiens (Human).